The chain runs to 493 residues: uncharacterized protein (493 aa).

Serine 328 bears the Phosphoserine mark. Residues 466-486 (AESNSGRGQNSKTKTTSVNLS) are compositionally biased toward polar residues. The disordered stretch occupies residues 466–493 (AESNSGRGQNSKTKTTSVNLSRNKRTRT).

This is an uncharacterized protein from Schizosaccharomyces pombe (strain 972 / ATCC 24843) (Fission yeast).